A 1395-amino-acid chain; its full sequence is Adventurous-gliding motility protein Z (1395 aa).

The Response regulatory domain occupies 4 to 122 (RVLIVESEHD…ELAALSHGIV (119 aa)). Position 48 is a 4-aspartylphosphate (D48). Disordered stretches follow at residues 137–172 (LNGT…AMTE), 874–893 (AAES…GLRS), 919–947 (EQHA…ARAH), 1212–1249 (AAES…AAKQ), 1287–1312 (RYKS…EDDE), and 1326–1395 (AAAA…ELDK). Residues 213 to 911 (EGKIQILRDE…LEQTHGQLAA (699 aa)) adopt a coiled-coil conformation. Basic and acidic residues-rich tracts occupy residues 919-928 (EQHAHQESRK) and 1228-1249 (QKER…AAKQ). Composition is skewed to low complexity over residues 1291–1306 (KSAT…AKPA) and 1326–1352 (AAAA…KKAP). A compositionally biased stretch (acidic residues) spans 1382–1395 (EDDDWTALVDELDK).

As to quaternary structure, interacts with MglA.

It is found in the cytoplasm. Required for adventurous-gliding motility (A motility), in response to environmental signals sensed by the frz chemosensory system. Forms ordered clusters that span the cell length and that remain stationary relative to the surface across which the cells move, serving as anchor points (focal, transient adhesion sites) that allow the bacterium to move forward. Clusters disassemble at the lagging cell pole. This is Adventurous-gliding motility protein Z (aglZ) from Myxococcus xanthus (strain DK1622).